The primary structure comprises 454 residues: tRNA-2-methylthio-N(6)-dimethylallyladenosine synthase (454 aa).

The region spanning 11–128 (KKLYIQTHGC…LPEMIETPRE (118 aa)) is the MTTase N-terminal domain. 6 residues coordinate [4Fe-4S] cluster: C20, C57, C91, C165, C169, and C172. In terms of domain architecture, Radical SAM core spans 151 to 382 (EADGATAFVS…QTRIIQQAQE (232 aa)). The 65-residue stretch at 385–449 (RRMVGNTERV…PNSLRGVLLG (65 aa)) folds into the TRAM domain.

This sequence belongs to the methylthiotransferase family. MiaB subfamily. As to quaternary structure, monomer. Requires [4Fe-4S] cluster as cofactor.

It localises to the cytoplasm. It carries out the reaction N(6)-dimethylallyladenosine(37) in tRNA + (sulfur carrier)-SH + AH2 + 2 S-adenosyl-L-methionine = 2-methylsulfanyl-N(6)-dimethylallyladenosine(37) in tRNA + (sulfur carrier)-H + 5'-deoxyadenosine + L-methionine + A + S-adenosyl-L-homocysteine + 2 H(+). In terms of biological role, catalyzes the methylthiolation of N6-(dimethylallyl)adenosine (i(6)A), leading to the formation of 2-methylthio-N6-(dimethylallyl)adenosine (ms(2)i(6)A) at position 37 in tRNAs that read codons beginning with uridine. In Saccharophagus degradans (strain 2-40 / ATCC 43961 / DSM 17024), this protein is tRNA-2-methylthio-N(6)-dimethylallyladenosine synthase.